The sequence spans 920 residues: Isoleucine--tRNA ligase (920 aa).

The 'HIGH' region signature appears at 58–68 (PYANGHLHLGH). Glu569 contributes to the L-isoleucyl-5'-AMP binding site. The 'KMSKS' region signature appears at 610-614 (KMSKS). Lys613 contacts ATP. Positions 895, 898, 910, and 913 each coordinate Zn(2+).

This sequence belongs to the class-I aminoacyl-tRNA synthetase family. IleS type 1 subfamily. Monomer. The cofactor is Zn(2+).

It localises to the cytoplasm. The enzyme catalyses tRNA(Ile) + L-isoleucine + ATP = L-isoleucyl-tRNA(Ile) + AMP + diphosphate. Catalyzes the attachment of isoleucine to tRNA(Ile). As IleRS can inadvertently accommodate and process structurally similar amino acids such as valine, to avoid such errors it has two additional distinct tRNA(Ile)-dependent editing activities. One activity is designated as 'pretransfer' editing and involves the hydrolysis of activated Val-AMP. The other activity is designated 'posttransfer' editing and involves deacylation of mischarged Val-tRNA(Ile). This chain is Isoleucine--tRNA ligase, found in Helicobacter pylori (strain Shi470).